The primary structure comprises 314 residues: THAP domain-containing protein 11 (314 aa).

A THAP-type zinc finger spans residues Met-1–Phe-80. Positions Val-85 to Gln-111 are disordered. Positions Arg-93–Gln-111 are enriched in low complexity. Residues Asp-243 to Tyr-246 carry the HCFC1-binding motif (HBM) motif. The stretch at Glu-255–Met-305 forms a coiled coil.

It belongs to the THAP11 family. In terms of assembly, forms homodimers. Interacts via HBM with HCFC1. Forms a complex with HCFC1 and ZNF143. Expressed in skin fibroblasts.

It localises to the nucleus. It is found in the cytoplasm. Functionally, transcription factor, which has both transcriptional activation and repression activities. Also modulates chromatin accessibility. In complex with HCFC1 and ZNF143, regulates the expression of several genes, including AP2S1, ESCO2, OPHN1, RBL1, UBXN8 and ZNF32. May regulate the expression of genes that encode both cytoplasmic and mitochondrial ribosomal proteins. Required for normal mitochondrial development and function. Regulates mitochondrial gene expression, including that of components of the electron transport chain. Involved in the maintainance of pluripotency in early embryonic cells, possibly through its action on mitochondrial maturation which is required to meet high energy demands of these cells. Required for early development of retina, preventing premature exit of retinal progenitor cells from the cell cycle. This effect may also be mediated by its action on mitochondria. Through the regulation of MMACHC gene expression, controls cobalamin metabolism. Required for normal brain development and neural precursor differentiation. Involved in cell growth. This chain is THAP domain-containing protein 11 (THAP11), found in Homo sapiens (Human).